The sequence spans 75 residues: Transaldolase (75 aa).

The protein belongs to the transaldolase family. Type 1 subfamily. In terms of assembly, homodimer. In terms of processing, phosphorylated. As to expression, predominantly expressed in Y-organs.

The protein resides in the cytoplasm. It catalyses the reaction D-sedoheptulose 7-phosphate + D-glyceraldehyde 3-phosphate = D-erythrose 4-phosphate + beta-D-fructose 6-phosphate. The protein operates within carbohydrate degradation; pentose phosphate pathway; D-glyceraldehyde 3-phosphate and beta-D-fructose 6-phosphate from D-ribose 5-phosphate and D-xylulose 5-phosphate (non-oxidative stage): step 2/3. Transaldolase is important for the balance of metabolites in the pentose-phosphate pathway. May play a role in the conversion of sterols into ecdysteroids via NADPH. The polypeptide is Transaldolase (Carcinus maenas (Common shore crab)).